The sequence spans 639 residues: Putative oxidoreductase UacF (639 aa).

4Fe-4S ferredoxin-type domains are found at residues 3 to 32, 47 to 77, 78 to 107, 110 to 139, and 201 to 235; these read KFIA…ENWP, KGQA…TFQS, DSVQ…MVDT, QKCD…LMDD, and QQAT…YIRL. [4Fe-4S] cluster is bound by residues C12, C15, C18, C22, C56, C59, C64, C68, C87, C90, C93, C97, C112, C115, C125, C129, C210, C213, C219, and C223.

The cofactor is [4Fe-4S] cluster.

Involved in formate-dependent uric acid degradation under microaerobic and anaerobic conditions. May reduce the enzymes necessary for uric acid degradation. This chain is Putative oxidoreductase UacF, found in Escherichia coli (strain K12).